The following is a 526-amino-acid chain: uncharacterized protein (526 aa).

2 WD repeats span residues 210 to 248 (SMEQ…HHDT) and 452 to 491 (SHNS…LIDS).

This is an uncharacterized protein from Acanthamoeba polyphaga mimivirus (APMV).